Reading from the N-terminus, the 320-residue chain is Cytochrome f (320 aa).

Positions 1–35 (MQTRNAFSWLKKQITRSISVSLMIYILTRTSISSA) are cleaved as a signal peptide. Heme is bound by residues Tyr-36, Cys-56, Cys-59, and His-60. The helical transmembrane segment at 286–306 (VQGLLFFLASVILAQIFLVLK) threads the bilayer.

It belongs to the cytochrome f family. As to quaternary structure, the 4 large subunits of the cytochrome b6-f complex are cytochrome b6, subunit IV (17 kDa polypeptide, petD), cytochrome f and the Rieske protein, while the 4 small subunits are PetG, PetL, PetM and PetN. The complex functions as a dimer. It depends on heme as a cofactor.

The protein resides in the plastid. The protein localises to the chloroplast thylakoid membrane. Its function is as follows. Component of the cytochrome b6-f complex, which mediates electron transfer between photosystem II (PSII) and photosystem I (PSI), cyclic electron flow around PSI, and state transitions. This is Cytochrome f from Solanum bulbocastanum (Wild potato).